A 562-amino-acid polypeptide reads, in one-letter code: Sesquiterpene synthase (562 aa).

3 residues coordinate Mg(2+): Asp315, Asp319, and Glu467. The DDXXD motif signature appears at 315 to 319 (DDIYD).

The protein belongs to the terpene synthase family. Tpsa subfamily. Requires Mg(2+) as cofactor. Mn(2+) serves as cofactor.

In terms of biological role, catalyzes the formation of beta-elemol, guaiol and bulnesol. The polypeptide is Sesquiterpene synthase (Santalum spicatum (Australian sandalwood)).